The sequence spans 158 residues: NAD(P)H-quinone oxidoreductase subunit J, chloroplastic (158 aa).

The protein belongs to the complex I 30 kDa subunit family. In terms of assembly, NDH is composed of at least 16 different subunits, 5 of which are encoded in the nucleus.

The protein resides in the plastid. Its subcellular location is the chloroplast thylakoid membrane. The catalysed reaction is a plastoquinone + NADH + (n+1) H(+)(in) = a plastoquinol + NAD(+) + n H(+)(out). The enzyme catalyses a plastoquinone + NADPH + (n+1) H(+)(in) = a plastoquinol + NADP(+) + n H(+)(out). Functionally, NDH shuttles electrons from NAD(P)H:plastoquinone, via FMN and iron-sulfur (Fe-S) centers, to quinones in the photosynthetic chain and possibly in a chloroplast respiratory chain. The immediate electron acceptor for the enzyme in this species is believed to be plastoquinone. Couples the redox reaction to proton translocation, and thus conserves the redox energy in a proton gradient. The protein is NAD(P)H-quinone oxidoreductase subunit J, chloroplastic of Helianthus annuus (Common sunflower).